The following is a 492-amino-acid chain: N-succinylglutamate 5-semialdehyde dehydrogenase (492 aa).

Position 220–225 (220–225 (GSANTG)) interacts with NAD(+). Catalysis depends on residues E243 and C277.

Belongs to the aldehyde dehydrogenase family. AstD subfamily.

It catalyses the reaction N-succinyl-L-glutamate 5-semialdehyde + NAD(+) + H2O = N-succinyl-L-glutamate + NADH + 2 H(+). It participates in amino-acid degradation; L-arginine degradation via AST pathway; L-glutamate and succinate from L-arginine: step 4/5. Functionally, catalyzes the NAD-dependent reduction of succinylglutamate semialdehyde into succinylglutamate. This chain is N-succinylglutamate 5-semialdehyde dehydrogenase, found in Escherichia coli (strain ATCC 8739 / DSM 1576 / NBRC 3972 / NCIMB 8545 / WDCM 00012 / Crooks).